The primary structure comprises 466 residues: Na(+)/H(+) antiporter NhaA (466 aa).

11 helical membrane-spanning segments follow: residues 32-52 (VGGV…NVPA), 74-94 (LSVQ…VAGI), 111-131 (AALP…VYTL), 142-162 (GWAV…AVIG), 172-192 (FLLT…AVFF), 195-215 (DLNF…WLLL), 221-241 (GWYV…NSGI), 280-300 (GLAV…GGAL), 310-330 (LGVV…GTWL), 348-368 (VFAV…IGEL), and 379-399 (EVKA…TTLL).

The protein belongs to the NhaA Na(+)/H(+) (TC 2.A.33) antiporter family.

It is found in the cell membrane. The catalysed reaction is Na(+)(in) + 2 H(+)(out) = Na(+)(out) + 2 H(+)(in). Functionally, na(+)/H(+) antiporter that extrudes sodium in exchange for external protons. This chain is Na(+)/H(+) antiporter NhaA, found in Streptomyces avermitilis (strain ATCC 31267 / DSM 46492 / JCM 5070 / NBRC 14893 / NCIMB 12804 / NRRL 8165 / MA-4680).